Consider the following 316-residue polypeptide: BTB/POZ domain-containing protein Y57A10B.3 (316 aa).

An N-terminal signal peptide occupies residues 1–21 (MSAMRRCTCFIICLLTSYTYG). N91, N107, N118, N133, N191, and N260 each carry an N-linked (GlcNAc...) asparagine glycan. Residues 158 to 226 (RDAVLIVEGK…VHSTATFPND (69 aa)) enclose the BTB domain.

Its subcellular location is the secreted. This is BTB/POZ domain-containing protein Y57A10B.3 (btb-14) from Caenorhabditis elegans.